Consider the following 918-residue polypeptide: Interleukin-6 receptor subunit beta (918 aa).

A signal peptide spans 1–22; that stretch reads MLTLQTWLVQALFIFLTTESTG. The Extracellular segment spans residues 23–619; that stretch reads ELLDPCGYIS…TPKFAQGEIE (597 aa). One can recognise an Ig-like C2-type domain in the interval 26–120; sequence DPCGYISPES…LEQNVYGITI (95 aa). 2 disulfides stabilise this stretch: Cys-28-Cys-54 and Cys-48-Cys-103. Residues Asn-43, Asn-83, and Asn-131 are each glycosylated (N-linked (GlcNAc...) asparagine). 5 Fibronectin type-III domains span residues 125–216, 224–324, 329–424, 426–517, and 518–613; these read PPEK…NFDP, PPHN…TYED, APSF…FQAT, PVMD…LKQA, and PPSK…TPKF. An intrachain disulfide couples Cys-134 to Cys-144. The N-linked (GlcNAc...) asparagine glycan is linked to Asn-157. Cys-172 and Cys-182 form a disulfide bridge. Residue Asn-227 is glycosylated (N-linked (GlcNAc...) asparagine). The WSXWS motif motif lies at 310 to 314; that stretch reads WSDWS. Asn-379 and Asn-383 each carry an N-linked (GlcNAc...) asparagine glycan. N-linked (GlcNAc...) (complex) asparagine glycosylation occurs at Asn-390. A disulfide bridge links Cys-458 with Cys-466. N-linked (GlcNAc...) asparagine glycans are attached at residues Asn-553 and Asn-564. The chain crosses the membrane as a helical span at residues 620–641; that stretch reads AIVVPVCLAFLLTTLLGVLFCF. Residues 642–918 are Cytoplasmic-facing; that stretch reads NKRDLIKKHI…TVRQGGYMPQ (277 aa). The Box 1 motif motif lies at 651–659; it reads IWPNVPDPS. Disordered regions lie at residues 660-681 and 722-758; these read KSHIAQWSPHTPPRHNFNSKDQ and EGHSSGIGGSSCMSSSRPSISSSDENESSQNTSSTVQ. Ser-661 and Ser-667 each carry phosphoserine. Positions 731–755 are enriched in low complexity; the sequence is SSCMSSSRPSISSSDENESSQNTSS. Phosphoserine occurs at positions 782, 789, 829, and 839.

This sequence belongs to the type I cytokine receptor family. Type 2 subfamily. As to quaternary structure, component of a hexamer of two molecules each of IL6, IL6R and IL6ST; associates with the complex IL6:IL6R but does not interact with IL6. Forms heterodimers composed of LIFR and IL6ST (type I OSM receptor) which are activated by LIF and OSM. Also forms heterodimers composed of OSMR and IL6ST (type II receptor) which are activated by OSM but not by LIF. Component of a receptor complex composed of IL6ST/GP130, IL27RA/WSX1 and CNTFR which interacts with the neuroprotective peptide humanin. Interacts with HCK. Interacts with INPP5D/SHIP1. Interacts with SRC and YES. Interacts with ARMH4; this interaction prevents IL6ST protein homodimerization and bridges ARMH4 with IL6R and STAT3 and therefore inhibits phosphorylation of STAT3 at 'Tyr-705'. (Microbial infection) The homodimer binds two molecules of herpes virus 8/HHV-8 protein vIL-6. In terms of processing, phosphorylation of Ser-782 down-regulates cell surface expression. Heavily N-glycosylated. Glycosylation is required for protein stability and localization in plasma membrane but not for ligand binding. Found in all the tissues and cell lines examined. Expression not restricted to IL6 responsive cells. In terms of tissue distribution, expressed in blood serum (at protein level).

Its subcellular location is the cell membrane. It is found in the secreted. In terms of biological role, signal-transducing molecule. The receptor systems for IL6, LIF, OSM, CNTF, IL11, CTF1 and BSF3 can utilize IL6ST for initiating signal transmission. Binding of IL6 to IL6R induces IL6ST homodimerization and formation of a high-affinity receptor complex, which activates the intracellular JAK-MAPK and JAK-STAT3 signaling pathways. That causes phosphorylation of IL6ST tyrosine residues which in turn activates STAT3. In parallel, the IL6 signaling pathway induces the expression of two cytokine receptor signaling inhibitors, SOCS1 and SOCS3, which inhibit JAK and terminate the activity of the IL6 signaling pathway as a negative feedback loop. Also activates the yes-associated protein 1 (YAP) and NOTCH pathways to control inflammation-induced epithelial regeneration, independently of STAT3. Acts as a receptor for the neuroprotective peptide humanin as part of a complex with IL27RA/WSX1 and CNTFR. Mediates signals which regulate immune response, hematopoiesis, pain control and bone metabolism. Has a role in embryonic development. Essential for survival of motor and sensory neurons and for differentiation of astrocytes. Required for expression of TRPA1 in nociceptive neurons. Required for the maintenance of PTH1R expression in the osteoblast lineage and for the stimulation of PTH-induced osteoblast differentiation. Required for normal trabecular bone mass and cortical bone composition. Its function is as follows. Binds to the soluble IL6:sIL6R complex (hyper-IL6), thereby blocking IL6 trans-signaling. Inhibits sIL6R-dependent acute phase response. Also blocks IL11 cluster signaling through IL11R. The chain is Interleukin-6 receptor subunit beta from Homo sapiens (Human).